A 286-amino-acid polypeptide reads, in one-letter code: Nucleotide-binding protein PLES_48441 (286 aa).

An ATP-binding site is contributed by 8-15 (GRSGSGKS). 60 to 63 (DARN) serves as a coordination point for GTP.

This sequence belongs to the RapZ-like family.

Its function is as follows. Displays ATPase and GTPase activities. The chain is Nucleotide-binding protein PLES_48441 from Pseudomonas aeruginosa (strain LESB58).